The following is a 329-amino-acid chain: MTGNAGEWCLMESDPGVFTELIKGFGCRGAQVEEIWSLEPENFEKLKPVHGLIFLFKWQPGEEPAGSVVQDSRLDTIFFAKQVINNACATQAIVSVLLNCTHQDVHLGETLSEFKEFSQSFDAAMKGLALSNSDVIRQVHNSFARQQMFEFDTKTSAKEEDAFHFVSYVPVNGRLYELDGLREGPIDLGACNQDDWISAVRPVIEKRIQKYSEGEIRFNLMAIVSDRKMIYEQKIAELQRQLAEEEPMDTDQGNSMLSAIQSEVAKNQMLIEEEVQKLKRYKIENIRRKHNYLPFIMELLKTLAEHQQLIPLVEKAKEKQNAKKAQETK.

Residues 7–225 enclose the UCH catalytic domain; it reads EWCLMESDPG…IRFNLMAIVS (219 aa). The residue at position 47 (lysine 47) is an N6-succinyllysine. Residue cysteine 88 is the Nucleophile of the active site. Lysine 158 is subject to N6-acetyllysine. Histidine 164 (proton donor) is an active-site residue. Lysine 289 is subject to N6-succinyllysine. Residues 291 to 319 enclose the ULD domain; that stretch reads NYLPFIMELLKTLAEHQQLIPLVEKAKEK. An interaction with ADRM1 region spans residues 313–329; the sequence is VEKAKEKQNAKKAQETK.

This sequence belongs to the peptidase C12 family. In terms of assembly, component of the 19S (PA700) regulatory complex of the 26S proteasome. Interacts with ADRM1 and NFRKB; in vitro ADRM1 and NFRKB compete for interaction with UCHL5. Component of the INO80 complex; specifically part of a complex module associated with N-terminus of INO80.

The protein resides in the cytoplasm. The protein localises to the nucleus. It carries out the reaction Thiol-dependent hydrolysis of ester, thioester, amide, peptide and isopeptide bonds formed by the C-terminal Gly of ubiquitin (a 76-residue protein attached to proteins as an intracellular targeting signal).. Its activity is regulated as follows. Activated by ADRM1. Inhibited by interaction with NFRKB. In terms of biological role, protease that specifically cleaves 'Lys-48'-linked polyubiquitin chains. Deubiquitinating enzyme associated with the 19S regulatory subunit of the 26S proteasome. Putative regulatory component of the INO80 complex; however is inactive in the INO80 complex and is activated by a transient interaction of the INO80 complex with the proteasome via ADRM1. The protein is Ubiquitin carboxyl-terminal hydrolase isozyme L5 (UCHL5) of Homo sapiens (Human).